The sequence spans 551 residues: Glucans biosynthesis protein D (551 aa).

The segment at residues 1–32 (MNRRRFIKGSMAMAAVCGSSGIASLFSQAAFA) is a signal peptide (tat-type signal).

Belongs to the OpgD/OpgG family. In terms of processing, predicted to be exported by the Tat system. The position of the signal peptide cleavage has not been experimentally proven.

The protein localises to the periplasm. It participates in glycan metabolism; osmoregulated periplasmic glucan (OPG) biosynthesis. Probably involved in the control of the structural glucose backbone of osmoregulated periplasmic glucans (OPGs). In Salmonella paratyphi A (strain ATCC 9150 / SARB42), this protein is Glucans biosynthesis protein D.